The following is a 95-amino-acid chain: Selenoprotein K (95 aa).

Residues leucine 20–isoleucine 42 traverse the membrane as a helical segment. A disordered region spans residues threonine 47 to arginine 95. Residue selenocysteine 93 is a non-standard amino acid, selenocysteine.

It belongs to the selenoprotein K family.

Its subcellular location is the endoplasmic reticulum membrane. The protein localises to the cell membrane. In terms of biological role, required for Ca(2+) flux in immune cells and plays a role in T-cell proliferation and in T-cell and neutrophil migration. Involved in endoplasmic reticulum-associated degradation (ERAD) of soluble glycosylated proteins. Required for cell surface expression of CD36 and involved in macrophage uptake of low-density lipoprotein and in foam cell formation. Required for palmitoylation. In Xenopus laevis (African clawed frog), this protein is Selenoprotein K (selenok).